The chain runs to 341 residues: Glyceraldehyde-3-phosphate dehydrogenase (341 aa).

Residues threonine 11–isoleucine 12 and glycine 109 each bind NAD(+). Position 138–140 (serine 138–asparagine 140) interacts with D-glyceraldehyde 3-phosphate. Cysteine 139 functions as the Nucleophile in the catalytic mechanism. Arginine 167 provides a ligand contact to NAD(+). Residues threonine 169 and histidine 192–alanine 193 contribute to the D-glyceraldehyde 3-phosphate site. NAD(+) is bound at residue glutamine 299.

It belongs to the glyceraldehyde-3-phosphate dehydrogenase family. As to quaternary structure, homotetramer.

The protein resides in the cytoplasm. It carries out the reaction D-glyceraldehyde 3-phosphate + phosphate + NADP(+) = (2R)-3-phospho-glyceroyl phosphate + NADPH + H(+). The catalysed reaction is D-glyceraldehyde 3-phosphate + phosphate + NAD(+) = (2R)-3-phospho-glyceroyl phosphate + NADH + H(+). The protein operates within carbohydrate degradation; glycolysis; pyruvate from D-glyceraldehyde 3-phosphate: step 1/5. The protein is Glyceraldehyde-3-phosphate dehydrogenase of Picrophilus torridus (strain ATCC 700027 / DSM 9790 / JCM 10055 / NBRC 100828 / KAW 2/3).